The sequence spans 419 residues: Tyrosine--tRNA ligase 1 (419 aa).

Tyr-35 is a binding site for L-tyrosine. The 'HIGH' region signature appears at 40-49 (PTAGSLHIGH). 2 residues coordinate L-tyrosine: Tyr-172 and Gln-176. A 'KMSKS' region motif is present at residues 232 to 236 (KFGKT). Residue Lys-235 participates in ATP binding. Residues 353-418 (QDLVELLIES…KKHFCLVKRA (66 aa)) enclose the S4 RNA-binding domain.

The protein belongs to the class-I aminoacyl-tRNA synthetase family. TyrS type 1 subfamily. As to quaternary structure, homodimer.

Its subcellular location is the cytoplasm. The catalysed reaction is tRNA(Tyr) + L-tyrosine + ATP = L-tyrosyl-tRNA(Tyr) + AMP + diphosphate + H(+). Catalyzes the attachment of tyrosine to tRNA(Tyr) in a two-step reaction: tyrosine is first activated by ATP to form Tyr-AMP and then transferred to the acceptor end of tRNA(Tyr). This is Tyrosine--tRNA ligase 1 from Vibrio parahaemolyticus serotype O3:K6 (strain RIMD 2210633).